The following is a 129-amino-acid chain: Iron-sulfur cluster assembly 1 homolog, mitochondrial (129 aa).

The N-terminal 12 residues, 1 to 12 (MSASLVRATVRA), are a transit peptide targeting the mitochondrion. Positions 57, 121, and 123 each coordinate Fe cation.

This sequence belongs to the HesB/IscA family. In terms of assembly, interacts with CRY2, but not with CRY1 (in vitro).

The protein localises to the mitochondrion. Involved in the maturation of mitochondrial 4Fe-4S proteins functioning late in the iron-sulfur cluster assembly pathway. Probably involved in the binding of an intermediate of Fe/S cluster assembly. The polypeptide is Iron-sulfur cluster assembly 1 homolog, mitochondrial (Isca1) (Mus musculus (Mouse)).